A 164-amino-acid chain; its full sequence is Small ribosomal subunit protein uS5 (164 aa).

In terms of domain architecture, S5 DRBM spans 10–73 (IEERVVAINR…ESAKKNMIEV (64 aa)).

The protein belongs to the universal ribosomal protein uS5 family. Part of the 30S ribosomal subunit. Contacts proteins S4 and S8.

With S4 and S12 plays an important role in translational accuracy. Functionally, located at the back of the 30S subunit body where it stabilizes the conformation of the head with respect to the body. This is Small ribosomal subunit protein uS5 from Streptococcus suis (strain 98HAH33).